We begin with the raw amino-acid sequence, 369 residues long: 4-hydroxy-3-methylbut-2-en-1-yl diphosphate synthase (flavodoxin) (369 aa).

Residues C270, C273, C305, and E312 each coordinate [4Fe-4S] cluster.

The protein belongs to the IspG family. The cofactor is [4Fe-4S] cluster.

The enzyme catalyses (2E)-4-hydroxy-3-methylbut-2-enyl diphosphate + oxidized [flavodoxin] + H2O + 2 H(+) = 2-C-methyl-D-erythritol 2,4-cyclic diphosphate + reduced [flavodoxin]. Its pathway is isoprenoid biosynthesis; isopentenyl diphosphate biosynthesis via DXP pathway; isopentenyl diphosphate from 1-deoxy-D-xylulose 5-phosphate: step 5/6. Its function is as follows. Converts 2C-methyl-D-erythritol 2,4-cyclodiphosphate (ME-2,4cPP) into 1-hydroxy-2-methyl-2-(E)-butenyl 4-diphosphate. This Pseudomonas syringae pv. tomato (strain ATCC BAA-871 / DC3000) protein is 4-hydroxy-3-methylbut-2-en-1-yl diphosphate synthase (flavodoxin).